Here is a 331-residue protein sequence, read N- to C-terminus: MFHKTEEFFPKKTDSDVDDMDTSDTQWGWFYLAECGKWHMFQPDTNIQCSVSSEDIEKSFKTNPCGSISFTTSKFSYKIDFAEMKQMNLVTGKQRLIKRAPFSISAFSYICENEAIPMPTHWENVNPDVPYQLVSLQNQTHEYNEVASLFGKTMDRNRIKRIQRIQNLDLWEFFCRKKAQLKKKRGVPQINEQMLFHGTSSEFVEAICIHNFDWRINGVHGAVFGKGTYFARDAAYSSRFCKDDIKHGNTFQIHGVSLQQRHLFRTYKSMFLARVLIGDYINGDSKYMRPPSKDGSYVNLYDSCVDDTWNPKIFVVFDANQIYPEYLIDFH.

Residue Lys-11 is modified to N6-(ADP-ribosyl)lysine. The 85-residue stretch at 15 to 99 (SDVDDMDTSD…VTGKQRLIKR (85 aa)) folds into the WWE domain. Cys-49 and Cys-65 each carry ADP-ribosylcysteine. Asp-80 bears the ADP-ribosyl aspartic acid mark. The PARP catalytic domain maps to 116 to 331 (IPMPTHWENV…IYPEYLIDFH (216 aa)).

The protein belongs to the ARTD/PARP family. Post-translationally, auto-mono-ADP-ribosylated. Predominantly expressed in testis, preferentially in postmeiotic germ cells. Also detectable in other tissues, including liver, lung, spleen, thymus and brain.

It is found in the nucleus. The protein localises to the nuclear pore complex. It catalyses the reaction L-aspartyl-[protein] + NAD(+) = 4-O-(ADP-D-ribosyl)-L-aspartyl-[protein] + nicotinamide. It carries out the reaction L-cysteinyl-[protein] + NAD(+) = S-(ADP-D-ribosyl)-L-cysteinyl-[protein] + nicotinamide + H(+). The catalysed reaction is L-glutamyl-[protein] + NAD(+) = 5-O-(ADP-D-ribosyl)-L-glutamyl-[protein] + nicotinamide. The enzyme catalyses L-lysyl-[protein] + NAD(+) = N(6)-(ADP-D-ribosyl)-L-lysyl-[protein] + nicotinamide + H(+). In terms of biological role, mono-ADP-ribosyltransferase that mediates mono-ADP-ribosylation of target proteins. Plays a role in nuclear envelope stability and nuclear remodeling during spermiogenesis. Inhibits the type I interferon activated signaling pathway. Mechanistically, mono-ADP-ribosylates beta-TrCP/BTRC to promote IFNAR1 ubiquitination and protect BTRC from ubiquitin-proteasome degradation. The sequence is that of Protein mono-ADP-ribosyltransferase PARP11 from Mus musculus (Mouse).